A 231-amino-acid chain; its full sequence is Sensory transduction protein BceR (231 aa).

Residues K3–L116 form the Response regulatory domain. At D52 the chain carries 4-aspartylphosphate. The ompR/PhoB-type DNA-binding region spans T127–E225.

In terms of processing, phosphorylated by BceS.

Its subcellular location is the cytoplasm. In terms of biological role, member of the two-component regulatory system BceS/BceR involved in the regulation of bacitracin resistance. When activated by BceS, binds to the upstream region of the bceAB promoter and up-regulates the expression of these two genes. This chain is Sensory transduction protein BceR (bceR), found in Halalkalibacterium halodurans (strain ATCC BAA-125 / DSM 18197 / FERM 7344 / JCM 9153 / C-125) (Bacillus halodurans).